The following is a 595-amino-acid chain: Anthranilate synthase alpha subunit 1, chloroplastic (595 aa).

Residues 1 to 54 constitute a chloroplast transit peptide; it reads MSSSMNVATMQALTFSRRLLPSVASRYLSSSSVTVTGYSGRSSAYAPSFRSIKC. Valine 55 is modified (N-acetylvaline). Residues serine 115 and 356 to 358 contribute to the L-tryptophan site; that span reads PYM. 391–392 contributes to the chorismate binding site; sequence GT. Glutamate 418 lines the Mg(2+) pocket. Residues tyrosine 506, arginine 526, 558 to 560, and glycine 560 contribute to the chorismate site; that span reads GAG. A Mg(2+)-binding site is contributed by glutamate 573.

The protein belongs to the anthranilate synthase component I family. Heterotetramer consisting of two non-identical subunits: a beta subunit and a large alpha subunit. The cofactor is Mg(2+). As to expression, expressed in the central cylinder of mature primary root zones, including pericycle and early lateral root primordia, and vasculature of cotyledons.

It localises to the plastid. The protein resides in the chloroplast. The enzyme catalyses chorismate + L-glutamine = anthranilate + pyruvate + L-glutamate + H(+). It functions in the pathway amino-acid biosynthesis; L-tryptophan biosynthesis; L-tryptophan from chorismate: step 1/5. Feedback inhibition by tryptophan. Functionally, part of a heterotetrameric complex that catalyzes the two-step biosynthesis of anthranilate, an intermediate in the biosynthesis of L-tryptophan. In the first step, the glutamine-binding beta subunit of anthranilate synthase (AS) provides the glutamine amidotransferase activity which generates ammonia as a substrate that, along with chorismate, is used in the second step, catalyzed by the large alpha subunit of AS to produce anthranilate. Plays an important regulatory role in auxin production via the tryptophan-dependent biosynthetic pathway. The chain is Anthranilate synthase alpha subunit 1, chloroplastic (ASA1) from Arabidopsis thaliana (Mouse-ear cress).